The primary structure comprises 119 residues: Beta-2-microglobulin (119 aa).

The N-terminal stretch at 1–20 is a signal peptide; it reads MARSVTVIFLVLVSLAVVLA. One can recognise an Ig-like C1-type domain in the interval 25–114; sequence PQIQVYSRHP…VTLKEPKTVT (90 aa). A disulfide bridge links Cys-45 with Cys-100.

Belongs to the beta-2-microglobulin family. Heterodimer of an alpha chain and a beta chain. Beta-2-microglobulin is the beta-chain of major histocompatibility complex class I molecules. Forms a heterotrimer with MR1 and a metabolite antigen.

It localises to the secreted. In terms of biological role, component of the class I major histocompatibility complex (MHC). Involved in the presentation of peptide antigens to the immune system. The polypeptide is Beta-2-microglobulin (B2m) (Rattus norvegicus (Rat)).